Here is a 304-residue protein sequence, read N- to C-terminus: Probable aspartoacylase (304 aa).

His13 and Glu16 together coordinate Zn(2+). Substrate is bound by residues Arg55 and 62–63 (NR). Residue His105 coordinates Zn(2+). 2 residues coordinate substrate: Glu163 and Tyr273.

This sequence belongs to the AspA/AstE family. Aspartoacylase subfamily. It depends on Zn(2+) as a cofactor.

The catalysed reaction is an N-acyl-L-aspartate + H2O = a carboxylate + L-aspartate. The protein is Probable aspartoacylase of Prochlorococcus marinus (strain MIT 9313).